The chain runs to 235 residues: Urease accessory protein UreF (235 aa).

Belongs to the UreF family. In terms of assembly, ureD, UreF and UreG form a complex that acts as a GTP-hydrolysis-dependent molecular chaperone, activating the urease apoprotein by helping to assemble the nickel containing metallocenter of UreC. The UreE protein probably delivers the nickel.

It localises to the cytoplasm. In terms of biological role, required for maturation of urease via the functional incorporation of the urease nickel metallocenter. This Haemophilus influenzae (strain PittEE) protein is Urease accessory protein UreF.